Here is a 328-residue protein sequence, read N- to C-terminus: dITP/XTP pyrophosphatase (328 aa).

Residues M1 to T129 form a unknown region. Residues I130–Q324 are NTP pyrophosphatase. T134–K139 is a binding site for substrate. D196 acts as the Proton acceptor in catalysis. D196 is a binding site for Mg(2+). Substrate-binding positions include S197, F280–D283, K303, and H308–R309.

Belongs to the HAM1 NTPase family. As to quaternary structure, homodimer. Requires Mg(2+) as cofactor.

The enzyme catalyses XTP + H2O = XMP + diphosphate + H(+). The catalysed reaction is dITP + H2O = dIMP + diphosphate + H(+). It catalyses the reaction ITP + H2O = IMP + diphosphate + H(+). Its function is as follows. Pyrophosphatase that catalyzes the hydrolysis of nucleoside triphosphates to their monophosphate derivatives, with a high preference for the non-canonical purine nucleotides XTP (xanthosine triphosphate), dITP (deoxyinosine triphosphate) and ITP. Seems to function as a house-cleaning enzyme that removes non-canonical purine nucleotides from the nucleotide pool, thus preventing their incorporation into DNA/RNA and avoiding chromosomal lesions. The sequence is that of dITP/XTP pyrophosphatase from Streptococcus pyogenes serotype M18 (strain MGAS8232).